Reading from the N-terminus, the 180-residue chain is Ribosome maturation factor RimM (180 aa).

Residues 104–177 enclose the PRC barrel domain; the sequence is PEEFHDHQLV…RVVVDPPGGL (74 aa).

It belongs to the RimM family. Binds ribosomal protein uS19.

It is found in the cytoplasm. Functionally, an accessory protein needed during the final step in the assembly of 30S ribosomal subunit, possibly for assembly of the head region. Essential for efficient processing of 16S rRNA. May be needed both before and after RbfA during the maturation of 16S rRNA. It has affinity for free ribosomal 30S subunits but not for 70S ribosomes. The polypeptide is Ribosome maturation factor RimM (Salinispora arenicola (strain CNS-205)).